The chain runs to 1087 residues: Synaptopodin-2 (1087 aa).

In terms of domain architecture, PDZ spans 6–88 (FICISMTGGA…SLHLLVKRPS (83 aa)). 3 disordered regions span residues 24-52 (GKEE…EGDE), 88-112 (SSGT…HEGP), and 207-272 (GPIV…AGLP). Residues 101–112 (TTNHQHLTHEGP) are compositionally biased toward basic and acidic residues. Composition is skewed to polar residues over residues 207–230 (GPIV…SQLE) and 246–255 (TSLTSSTSSG). Residues serine 300, serine 319, and serine 320 each carry the phosphoserine modification. The interval 320–359 (SEGTEHGEDQRSGKDQSRPHKHRARHARLRRSESLSEKQV) is disordered. Positions 322–337 (GTEHGEDQRSGKDQSR) are enriched in basic and acidic residues. The residue at position 323 (threonine 323) is a Phosphothreonine. Positions 338 to 348 (PHKHRARHARL) are enriched in basic residues. Positions 349–359 (RRSESLSEKQV) are enriched in basic and acidic residues. A Nuclear localization signal motif is present at residues 388–396 (KKRRRRARK). Residues serine 540, serine 541, serine 543, and serine 546 each carry the phosphoserine modification. An interaction with YWHAB region spans residues 551–557 (RSLASVP). Position 555 is a phosphoserine; by PKA (serine 555). Disordered stretches follow at residues 581–817 (AKPF…ALNL) and 832–863 (NYTP…GMSG). At serine 596 the chain carries Phosphoserine. The segment at 599–804 (RSVTSPISDF…AVSSIKIAQP (206 aa)) is interaction with YWHAB. Position 602 is a phosphothreonine; by PKA and CaMK2 (threonine 602). Serine 603 is subject to Phosphoserine. 2 stretches are compositionally biased toward pro residues: residues 609 to 622 (PAPP…PPPE) and 636 to 647 (AQPPPWPQPAPW). The PPPY motif signature appears at 611-614 (PPPY). Tyrosine 614 is modified (phosphotyrosine). A Phosphoserine modification is found at serine 618. The segment at 656 to 796 (SEQIASRDER…PPNPPQVTAV (141 aa)) is F-actin binding. Positions 656-909 (SEQIASRDER…LPASWKYSSN (254 aa)) are F-actin bundling activity. Interaction with ACTN2 regions lie at residues 656-917 (SEQI…PPVA) and 894-1087 (QSPT…VVEE). A phosphoserine mark is found at serine 697 and serine 719. Positions 740–893 (AKQKTPPPVA…DTVQAHTVRA (154 aa)) are actin binding. Threonine 744 is subject to Phosphothreonine. Positions 751–777 (KPAVKSPSSSQPVAPVSPVWSPGVAPA) are enriched in low complexity. Phosphoserine is present on residues serine 767 and serine 771. A compositionally biased stretch (polar residues) spans 781 to 797 (AFSTSNPPNPPQVTAVS). An interaction with FLNC region spans residues 803-1087 (QPAAPPARPA…QVWKPSVVEE (285 aa)). Phosphoserine occurs at positions 895, 899, and 903. Disordered regions lie at residues 930–952 (AIKS…KKPL), 970–1012 (FTFQ…PTNA), and 1037–1060 (PVSA…STSY). The segment at 993 to 1012 (PAMKQALPPRQANVGSPTNA) is interaction with ZYX. A phosphoserine mark is found at serine 1008 and serine 1050. Over residues 1037 to 1051 (PVSASPVPVSVPTSP) the composition is skewed to low complexity.

This sequence belongs to the synaptopodin family. May self-associate in muscle cells under oxidative stress. Binds F-actin. Interacts with ACTN2; ACTN2 is proposed to anchor SYOP2 at Z lines in mature myocytes. Interacts with AKAP6, PPP3CA and CAMK2A. Interacts (phosphorylated form) with YWHAB; YWHAB competes with ACTN2 for interaction with SYNPO2. Interacts with KPNA2; mediating nuclear import of SYNOP2; dependent on interaction with YWHAB. Interacts with IPO13; may be implicated in SYNOP2 nuclear import. Interacts with ZYX, FLNC, ILK. Interacts with BAG3 (via WW 1 domain). May associate with the CASA complex consisting of HSPA8, HSPB8 and BAG3. Interacts with VPS18. Phosphorylated by PKA, and by CaMK2 at multiple sites. Dephosphorylated by calcineurin at Ser-555 and Thr-602; abrogating interaction with YWHAB and impairing nuclear import. As to expression, expressed in skeletal muscle, heart, colon, stomach, uterus and lung. Expression is restricted to muscle cell layers in colon, uterus and stomach.

It localises to the nucleus. The protein resides in the cytoplasm. Its subcellular location is the myofibril. The protein localises to the sarcomere. It is found in the z line. It localises to the cell junction. The protein resides in the focal adhesion. Functionally, has an actin-binding and actin-bundling activity. Can induce the formation of F-actin networks. At the sarcomeric Z lines is proposed to act as adapter protein that links nascent myofibers to the sarcolemma via ZYX and may play a role in early assembly and stabilization of the Z lines. Involved in autophagosome formation. May play a role in chaperone-assisted selective autophagy (CASA) involved in Z lines maintenance in striated muscle under mechanical tension; may link the client-processing CASA chaperone machinery to a membrane-tethering and fusion complex providing autophagosome membranes. Involved in regulation of cell migration. May be a tumor suppressor. This is Synaptopodin-2 (Synpo2) from Mus musculus (Mouse).